A 146-amino-acid polypeptide reads, in one-letter code: UPF0260 protein Sden_1632 (146 aa).

Belongs to the UPF0260 family.

This Shewanella denitrificans (strain OS217 / ATCC BAA-1090 / DSM 15013) protein is UPF0260 protein Sden_1632.